The following is a 116-amino-acid chain: Large ribosomal subunit protein uL18 (116 aa).

It belongs to the universal ribosomal protein uL18 family. As to quaternary structure, part of the 50S ribosomal subunit; part of the 5S rRNA/L5/L18/L25 subcomplex. Contacts the 5S and 23S rRNAs.

In terms of biological role, this is one of the proteins that bind and probably mediate the attachment of the 5S RNA into the large ribosomal subunit, where it forms part of the central protuberance. The chain is Large ribosomal subunit protein uL18 from Shewanella sp. (strain ANA-3).